The sequence spans 491 residues: Glutamyl-tRNA(Gln) amidotransferase subunit A (491 aa).

Catalysis depends on charge relay system residues Lys78 and Ser158. The Acyl-ester intermediate role is filled by Ser182.

Belongs to the amidase family. GatA subfamily. In terms of assembly, heterotrimer of A, B and C subunits.

The catalysed reaction is L-glutamyl-tRNA(Gln) + L-glutamine + ATP + H2O = L-glutaminyl-tRNA(Gln) + L-glutamate + ADP + phosphate + H(+). Functionally, allows the formation of correctly charged Gln-tRNA(Gln) through the transamidation of misacylated Glu-tRNA(Gln) in organisms which lack glutaminyl-tRNA synthetase. The reaction takes place in the presence of glutamine and ATP through an activated gamma-phospho-Glu-tRNA(Gln). In Nitrobacter winogradskyi (strain ATCC 25391 / DSM 10237 / CIP 104748 / NCIMB 11846 / Nb-255), this protein is Glutamyl-tRNA(Gln) amidotransferase subunit A.